A 489-amino-acid polypeptide reads, in one-letter code: Glycogen synthase (489 aa).

ADP-alpha-D-glucose is bound at residue Lys17.

It belongs to the glycosyltransferase 1 family. Bacterial/plant glycogen synthase subfamily.

The enzyme catalyses [(1-&gt;4)-alpha-D-glucosyl](n) + ADP-alpha-D-glucose = [(1-&gt;4)-alpha-D-glucosyl](n+1) + ADP + H(+). Its pathway is glycan biosynthesis; glycogen biosynthesis. In terms of biological role, synthesizes alpha-1,4-glucan chains using ADP-glucose. This chain is Glycogen synthase, found in Nitratidesulfovibrio vulgaris (strain ATCC 29579 / DSM 644 / CCUG 34227 / NCIMB 8303 / VKM B-1760 / Hildenborough) (Desulfovibrio vulgaris).